A 271-amino-acid polypeptide reads, in one-letter code: 3-methyl-2-oxobutanoate hydroxymethyltransferase (271 aa).

Residues Asp53 and Asp92 each coordinate Mg(2+). Residues 53-54, Asp92, and Lys120 each bind 3-methyl-2-oxobutanoate; that span reads DS. Position 122 (Glu122) interacts with Mg(2+). The Proton acceptor role is filled by Glu189.

The protein belongs to the PanB family. In terms of assembly, homodecamer; pentamer of dimers. The cofactor is Mg(2+).

It is found in the cytoplasm. It catalyses the reaction 3-methyl-2-oxobutanoate + (6R)-5,10-methylene-5,6,7,8-tetrahydrofolate + H2O = 2-dehydropantoate + (6S)-5,6,7,8-tetrahydrofolate. It functions in the pathway cofactor biosynthesis; (R)-pantothenate biosynthesis; (R)-pantoate from 3-methyl-2-oxobutanoate: step 1/2. Catalyzes the reversible reaction in which hydroxymethyl group from 5,10-methylenetetrahydrofolate is transferred onto alpha-ketoisovalerate to form ketopantoate. The polypeptide is 3-methyl-2-oxobutanoate hydroxymethyltransferase (Burkholderia multivorans (strain ATCC 17616 / 249)).